The following is a 113-amino-acid chain: Hydrogenase maturation factor HybF (113 aa).

2 residues coordinate Ni(2+): His-2 and Glu-3. Zn(2+) contacts are provided by Cys-73, Cys-76, Cys-89, and Cys-92.

This sequence belongs to the HypA/HybF family. HybF subfamily.

Its function is as follows. Involved in the maturation of [NiFe] hydrogenases. Required for nickel insertion into the metal center of the hydrogenase. The chain is Hydrogenase maturation factor HybF from Klebsiella pneumoniae.